Consider the following 193-residue polypeptide: Cilia- and flagella-associated protein 20 (193 aa).

Belongs to the CFAP20 family. Microtubule inner protein component of sperm flagellar doublet microtubules.

It is found in the nucleus. The protein resides in the cytoplasm. It localises to the cytoskeleton. The protein localises to the microtubule organizing center. Its subcellular location is the centrosome. It is found in the centriole. The protein resides in the cilium basal body. It localises to the cilium axoneme. The protein localises to the flagellum axoneme. In terms of biological role, cilium- and flagellum-specific protein that plays a role in axonemal structure organization and motility. Microtubule inner protein (MIP) part of the dynein-decorated doublet microtubules (DMTs) in cilia axoneme, which is required for motile cilia beating. Involved in the regulation of the size and morphology of cilia. Required for axonemal microtubules polyglutamylation. The protein is Cilia- and flagella-associated protein 20 of Homo sapiens (Human).